Consider the following 350-residue polypeptide: Cytosolic sulfotransferase 18 (350 aa).

Position 1 is an N-acetylmethionine (M1). The span at 1–17 (MESETLTAKATITTTTL) shows a compositional bias: low complexity. The interval 1–28 (MESETLTAKATITTTTLPSHDETKTEST) is disordered. A compositionally biased stretch (basic and acidic residues) spans 19-28 (SHDETKTEST). Position 93–98 (93–98 (KTGTTW)) interacts with 3'-phosphoadenylyl sulfate. The Proton acceptor role is filled by H155. Residues R177, S185, Y243, and 313-315 (RKG) contribute to the 3'-phosphoadenylyl sulfate site.

The protein belongs to the sulfotransferase 1 family. As to expression, expressed in roots, leaves and stems. Barely detected in siliques and flowers.

It is found in the cytoplasm. It carries out the reaction an aliphatic (Z)-desulfo-glucosinolate + 3'-phosphoadenylyl sulfate = a (Z)-omega-(methylsulfanyl)-N-sulfo-alkylhydroximate S-glucoside + adenosine 3',5'-bisphosphate + H(+). Its activity is regulated as follows. Inhibited by phosphoadenosine 5'-phosphate (PAP). Its function is as follows. Sulfotransferase that utilizes 3'-phospho-5'-adenylyl sulfate (PAPS) as sulfonate donor to catalyze the sulfate conjugation of desulfo-glucosinolates (dsGSs), the final step in the biosynthesis of the glucosinolate core structure. Preferred substrate are the long-chain desulfo-glucosinolates, 7-methylthioheptyl and 8-methylthiooctyl, derived from methionine. Substrate preference is desulfo-benzyl glucosinolate &gt; desulfo-4-methylthiobutyl glucosinolate &gt; desulfo-6-methylthiohexyl glucosinolate &gt; desulfo-3-methylthiopropyl glucosinolate &gt; desulfo-indol-3-yl methyl glucosinolate &gt; desulfo-singrin &gt; desulfo-3-butenyl glucosinolate. In Arabidopsis thaliana (Mouse-ear cress), this protein is Cytosolic sulfotransferase 18 (SOT18).